A 247-amino-acid polypeptide reads, in one-letter code: Caffeoyl-CoA O-methyltransferase (247 aa).

A substrate-binding site is contributed by Lys-21. Residues Thr-63, Glu-85, 87–88 (GV), Ser-93, Asp-111, and Ala-140 each bind S-adenosyl-L-methionine. Position 163 (Asp-163) interacts with substrate. Asp-163 is a binding site for a divalent metal cation. Asp-165 is a binding site for S-adenosyl-L-methionine. The a divalent metal cation site is built by Asp-189 and Asn-190. Asn-194 serves as a coordination point for substrate.

The protein belongs to the class I-like SAM-binding methyltransferase superfamily. Cation-dependent O-methyltransferase family. CCoAMT subfamily. As to quaternary structure, homodimer. Ca(2+) is required as a cofactor. Requires Mg(2+) as cofactor. It depends on Zn(2+) as a cofactor.

It carries out the reaction (E)-caffeoyl-CoA + S-adenosyl-L-methionine = (E)-feruloyl-CoA + S-adenosyl-L-homocysteine + H(+). It participates in aromatic compound metabolism; phenylpropanoid biosynthesis. In terms of biological role, methylates caffeoyl-CoA to feruloyl-CoA and 5-hydroxyferuloyl-CoA to sinapoyl-CoA. Plays a role in the synthesis of feruloylated polysaccharides. Involved in the reinforcement of the plant cell wall. Also involved in the responding to wounding or pathogen challenge by the increased formation of cell wall-bound ferulic acid polymers. This chain is Caffeoyl-CoA O-methyltransferase (CCOMT), found in Medicago sativa (Alfalfa).